The primary structure comprises 1411 residues: DNA-directed RNA polymerase subunit beta' (1411 aa).

Positions 70, 72, 85, and 88 each coordinate Zn(2+). Mg(2+) is bound by residues Asp460, Asp462, and Asp464. The Zn(2+) site is built by Cys814, Cys889, Cys896, and Cys899. The segment covering 1387–1399 has biased composition (polar residues); the sequence is RSTSSGTEITSPS. The interval 1387–1411 is disordered; it reads RSTSSGTEITSPSKDAIPLGSKVGF.

It belongs to the RNA polymerase beta' chain family. As to quaternary structure, the RNAP catalytic core consists of 2 alpha, 1 beta, 1 beta' and 1 omega subunit. When a sigma factor is associated with the core the holoenzyme is formed, which can initiate transcription. Requires Mg(2+) as cofactor. It depends on Zn(2+) as a cofactor.

It carries out the reaction RNA(n) + a ribonucleoside 5'-triphosphate = RNA(n+1) + diphosphate. DNA-dependent RNA polymerase catalyzes the transcription of DNA into RNA using the four ribonucleoside triphosphates as substrates. The polypeptide is DNA-directed RNA polymerase subunit beta' (Xylella fastidiosa (strain M12)).